Here is a 448-residue protein sequence, read N- to C-terminus: Phosphoglucosamine mutase (448 aa).

The Phosphoserine intermediate role is filled by Ser-101. Residues Ser-101, Asp-242, Asp-244, and Asp-246 each coordinate Mg(2+). Phosphoserine is present on Ser-101.

This sequence belongs to the phosphohexose mutase family. Mg(2+) is required as a cofactor. In terms of processing, activated by phosphorylation.

It carries out the reaction alpha-D-glucosamine 1-phosphate = D-glucosamine 6-phosphate. Functionally, catalyzes the conversion of glucosamine-6-phosphate to glucosamine-1-phosphate. The sequence is that of Phosphoglucosamine mutase from Afipia carboxidovorans (strain ATCC 49405 / DSM 1227 / KCTC 32145 / OM5) (Oligotropha carboxidovorans).